The primary structure comprises 90 residues: Small ribosomal subunit protein bS20 (90 aa).

Positions 1–28 (MPNTSSASKRLRQNEKRRLLNRATRSNM) are disordered.

This sequence belongs to the bacterial ribosomal protein bS20 family.

Binds directly to 16S ribosomal RNA. The chain is Small ribosomal subunit protein bS20 from Rhodopirellula baltica (strain DSM 10527 / NCIMB 13988 / SH1).